A 327-amino-acid polypeptide reads, in one-letter code: Zinc transport protein ZntB (327 aa).

At 1–271 (MESFAGKELQ…AMNRRTYTMS (271 aa)) the chain is on the cytoplasmic side. Residues 272–292 (LLAMVFLPTTFLTGLFGVNLG) form a helical membrane-spanning segment. Residues 293–300 (GIPGGDAP) are Periplasmic-facing. The helical transmembrane segment at 301–321 (FGFFTFCLMLVILVGGVAWWL) threads the bilayer. Residues 322-327 (KRSKWL) are Cytoplasmic-facing.

The protein belongs to the CorA metal ion transporter (MIT) (TC 1.A.35) family.

It localises to the cell inner membrane. The catalysed reaction is Zn(2+)(out) + H(+)(out) = Zn(2+)(in) + H(+)(in). Its function is as follows. Zinc transporter. Acts as a Zn(2+):proton symporter, which likely mediates zinc ion uptake. This is Zinc transport protein ZntB from Pectobacterium atrosepticum (strain SCRI 1043 / ATCC BAA-672) (Erwinia carotovora subsp. atroseptica).